Reading from the N-terminus, the 469-residue chain is Protein C-ets-2 (469 aa).

Positions A85–N170 constitute a PNT domain. Phosphoserine is present on residues S220 and S225. A disordered region spans residues N264–S289. Residues S295, S298, and S301 each carry the phosphoserine modification. Positions I363–V443 form a DNA-binding region, ETS.

It belongs to the ETS family. In terms of processing, phosphorylation by CDK10 at Ser-220 and Ser-225 creates a phosphodegron that targets ETS2 for proteasomal degradation.

The protein localises to the nucleus. In terms of biological role, transcription factor activating transcription. Binds specifically the DNA GGAA/T core motif (Ets-binding site or EBS) in gene promoters and stimulates transcription. In Homo sapiens (Human), this protein is Protein C-ets-2 (ETS2).